Here is a 112-residue protein sequence, read N- to C-terminus: MKKIEAIVRAEKFPEVKAALEERGFYGMTVTDVKGRGQQGGMQIQFRGRTMEVTLLPKVKLEIVVKDDAVEEVIGLIVNSAFTGSPGDGKIFIIPVEDVVRIRTGERGDDSL.

ADP contacts are provided by residues threonine 29, 38–39, valine 64, and 87–90; these read QQ and GDGK. ATP contacts are provided by residues threonine 29, 38 to 39, valine 64, 87 to 90, and 101 to 103; these read QQ, GDGK, and RIR.

The protein belongs to the P(II) protein family. Homotrimer. Interacts and forms a complex with Amt2.

It is found in the cytoplasm. Binding of adenosine nucleotides results in distinct, cooperative behavior for ATP and ADP. GlnK2 is completely insensitive to 2-oxoglutarate at a low level of intracellular nitrogen. In terms of biological role, involved in the regulation of nitrogen metabolism. Regulates the activity of its targets by protein-protein interaction in response to the nitrogen status of the cell. Regulates the activity of the ammonia channel Amt2 via direct interaction. The polypeptide is Nitrogen regulatory protein GlnK2 (Archaeoglobus fulgidus (strain ATCC 49558 / DSM 4304 / JCM 9628 / NBRC 100126 / VC-16)).